The chain runs to 315 residues: Probable carboxylesterase 3 (315 aa).

Met-1 carries the post-translational modification N-acetylmethionine. Residues 81–83 (HGG) carry the Involved in the stabilization of the negatively charged intermediate by the formation of the oxyanion hole motif. Active-site residues include Ser-160, Asp-258, and His-290.

Belongs to the 'GDXG' lipolytic enzyme family. Expressed in flowers and siliques.

The enzyme catalyses a carboxylic ester + H2O = an alcohol + a carboxylate + H(+). Its function is as follows. Carboxylesterase acting on esters with varying acyl chain length. This Arabidopsis thaliana (Mouse-ear cress) protein is Probable carboxylesterase 3 (CXE3).